The primary structure comprises 560 residues: Eukaryotic translation initiation factor 3 subunit D-1 (560 aa).

The segment at valine 98–serine 166 is disordered. Residues lysine 100 to asparagine 121 are compositionally biased toward basic residues. Threonine 128 is modified (phosphothreonine). Basic residues predominate over residues glycine 147–histidine 156. Positions glutamate 291 to proline 305 are RNA gate.

It belongs to the eIF-3 subunit D family. As to quaternary structure, component of the eukaryotic translation initiation factor 3 (eIF-3) complex. The eIF-3 complex interacts with pix.

It is found in the cytoplasm. MRNA cap-binding component of the eukaryotic translation initiation factor 3 (eIF-3) complex, which is involved in protein synthesis of a specialized repertoire of mRNAs and, together with other initiation factors, stimulates binding of mRNA and methionyl-tRNAi to the 40S ribosome. The eIF-3 complex specifically targets and initiates translation of a subset of mRNAs involved in cell proliferation. In the eIF-3 complex, eif3d specifically recognizes and binds the 7-methylguanosine cap of a subset of mRNAs. In Drosophila yakuba (Fruit fly), this protein is Eukaryotic translation initiation factor 3 subunit D-1.